The primary structure comprises 408 residues: Neutral cholesterol ester hydrolase 1 (408 aa).

At 1–4 (MRSS) the chain is on the cytoplasmic side. A helical; Signal-anchor for type II membrane protein membrane pass occupies residues 5–25 (CVLLTALLALAAYYIYIPLPS). The Lumenal segment spans residues 26–408 (SVSDPWKLML…SYIKWLDQNL (383 aa)). The Involved in the stabilization of the negatively charged intermediate by the formation of the oxyanion hole motif lies at 113–115 (HGG). Serine 191 is an active-site residue. Asparagine 270 and asparagine 287 each carry an N-linked (GlcNAc...) asparagine glycan. Residues aspartate 348 and histidine 378 contribute to the active site. N-linked (GlcNAc...) asparagine glycosylation occurs at asparagine 389.

The protein belongs to the 'GDXG' lipolytic enzyme family. Post-translationally, N-glycosylated.

It localises to the cell membrane. Its subcellular location is the microsome. The enzyme catalyses a 1-O-alkyl-2-acetyl-sn-glycerol + H2O = a 1-O-alkyl-sn-glycerol + acetate + H(+). The catalysed reaction is 1-O-hexadecyl-2-acetyl-sn-glycerol + H2O = 1-O-hexadecyl-sn-glycerol + acetate + H(+). It catalyses the reaction a cholesterol ester + H2O = cholesterol + a fatty acid + H(+). It carries out the reaction cholesteryl (9Z-octadecenoate) + H2O = cholesterol + (9Z)-octadecenoate + H(+). Its function is as follows. Hydrolyzes 2-acetyl monoalkylglycerol ether (1-O-alkyl-2-acetyl-sn-glycerol), the penultimate precursor of the pathway for de novo synthesis of platelet-activating factor. May be responsible for the hydrolysis of cholesterol esters (such as cholesteryl (9Z-octadecenoate)) in macrophages. Also involved in organ detoxification by hydrolyzing exogenous organophosphorus compounds. This is Neutral cholesterol ester hydrolase 1 (NCEH1) from Bos taurus (Bovine).